The primary structure comprises 302 residues: Rab effector Noc2 (302 aa).

A RabBD domain is found at 41–158 (QRRTQCLSPG…KRSGAWFYKG (118 aa)). The FYVE-type zinc finger occupies 89–146 (GNGVSQCLLCGEMLGFLGSSSVFCKDCRKKVCTKCGIEASPGQKRPLWLCKICSEQRE). Residues C95, C98, C112, C115, C120, C123, C138, and C141 each contribute to the Zn(2+) site. Disordered stretches follow at residues 174-194 (DPHF…SAEV) and 206-302 (VSSD…TTHY). S248 is modified (phosphoserine). A compositionally biased stretch (low complexity) spans 258–269 (SHLSGSQSSLGS).

As to quaternary structure, recruited to dense-core vesicles through specific interaction with RAB27A in endocrine cells. Interacts with RAB3A, RAB3B, RAB3C and RAB3D. Interacts with ZYX. In terms of tissue distribution, highly expressed in pancreatic islets and parotid. High to moderate expression in adrenal gland, pituitary gland and ovary.

It is found in the cytoplasm. The protein localises to the cytoplasmic vesicle. Its subcellular location is the secretory vesicle membrane. Rab GTPase effector involved in the late steps of regulated exocytosis, both in endocrine and exocrine cells. Regulates the exocytosis of dense-core vesicles in neuroendocrine cells through interaction with RAB27A. Acts as a potential RAB3B effector protein in epithelial cells. This chain is Rab effector Noc2 (Rph3al), found in Rattus norvegicus (Rat).